A 355-amino-acid polypeptide reads, in one-letter code: Probable aldo-keto reductase 3 (355 aa).

The active-site Proton donor is the tyrosine 70. A substrate-binding site is contributed by histidine 138. Serine 217 to glycine 227 serves as a coordination point for NADP(+).

It belongs to the aldo/keto reductase family.

The chain is Probable aldo-keto reductase 3 from Oryza sativa subsp. indica (Rice).